Consider the following 503-residue polypeptide: MEEFQRYLELDRSQQHYFLYPLIFQEYIYALAHDHGLNINRSILLENAGYDNKFSLLIVKRLIARMYQQNHLILSTNDSNQNRFLRRNKNLYSQMISEGFAVIVEIPFYLQLKSSLESKGIVKSHNLRSIHSIFPFLEDKISHLIYGLEILIPYPVHLEILVQTLRYWVKDASSLHLLRFFLHEYCNWNTPNKAGSSFSKRNQRLFFLLYNSHLCEYESIFIFLRNQSSHLRSTSSGTLLERIYFYGKIKYLVKVFVKAFQVNLLLLKDPFMHYVRYQGKSILASKGTPFLMKKWTYYFVNLWQCHFYLWSQPGRICINQLYNHSLDILGYLSSARLNPSMVRGQMLENSFLIDNAINKFDAIVPIIPLIGSLAKAKFCNVLGHPISKAVWTDLSDSDIIDQFGRICRNLSHYHSGSSQKKSLYRIKYILRLSCARTLARKHKSTVRAFLKRLGSGLLEEFFTAEEQVLYLTFPRASSASQRLYRRRIWYLDIICINDLANHE.

It belongs to the intron maturase 2 family. MatK subfamily.

The protein localises to the plastid. It localises to the chloroplast. In terms of biological role, usually encoded in the trnK tRNA gene intron. Probably assists in splicing its own and other chloroplast group II introns. This Panax ginseng (Korean ginseng) protein is Maturase K.